The sequence spans 195 residues: Putative 3-methyladenine DNA glycosylase (195 aa).

It belongs to the DNA glycosylase MPG family.

This Synechococcus sp. (strain JA-3-3Ab) (Cyanobacteria bacterium Yellowstone A-Prime) protein is Putative 3-methyladenine DNA glycosylase.